A 668-amino-acid polypeptide reads, in one-letter code: Eukaryotic translation initiation factor 3 subunit L (668 aa).

A compositionally biased stretch (polar residues) spans 1–17 (MVADASQQGQSNGAAFN). The tract at residues 1 to 42 (MVADASQQGQSNGAAFNQQQQYQQQQQRQLFGGEEEFGDEEE) is disordered. Low complexity predominate over residues 18–32 (QQQQYQQQQQRQLFG). The span at 33–42 (GEEEFGDEEE) shows a compositional bias: acidic residues. The PCI domain maps to 358 to 552 (SFTHILVFIM…QVVNTSDLDF (195 aa)). The segment at 625 to 668 (AGVKAGPPAFSQRSGGAGRSSVNKSAPAPAGAWGSSKPQPSVTA) is disordered. Residues 648–662 (KSAPAPAGAWGSSKP) are compositionally biased toward low complexity.

The protein belongs to the eIF-3 subunit L family. As to quaternary structure, component of the eukaryotic translation initiation factor 3 (eIF-3) complex.

The protein resides in the cytoplasm. Functionally, component of the eukaryotic translation initiation factor 3 (eIF-3) complex, which is involved in protein synthesis of a specialized repertoire of mRNAs and, together with other initiation factors, stimulates binding of mRNA and methionyl-tRNAi to the 40S ribosome. The eIF-3 complex specifically targets and initiates translation of a subset of mRNAs involved in cell proliferation. This Mycosarcoma maydis (Corn smut fungus) protein is Eukaryotic translation initiation factor 3 subunit L.